The sequence spans 187 residues: Probable cobalt-precorrin-6B C(15)-methyltransferase (decarboxylating) (187 aa).

S-adenosyl-L-methionine is bound by residues T15, 39–43 (GSCTG), E60, and A89.

It belongs to the methyltransferase superfamily. Archaeal-type CbiT family.

The catalysed reaction is Co-precorrin-6B + S-adenosyl-L-methionine = Co-precorrin-7 + S-adenosyl-L-homocysteine + CO2. It functions in the pathway cofactor biosynthesis; adenosylcobalamin biosynthesis; cob(II)yrinate a,c-diamide from sirohydrochlorin (anaerobic route): step 8/10. Functionally, catalyzes the methylation of C-15 in cobalt-precorrin-6B followed by the decarboxylation of C-12 to form cobalt-precorrin-7. This Halobacterium salinarum (strain ATCC 700922 / JCM 11081 / NRC-1) (Halobacterium halobium) protein is Probable cobalt-precorrin-6B C(15)-methyltransferase (decarboxylating).